Here is a 112-residue protein sequence, read N- to C-terminus: ATP synthase subunit c (112 aa).

2 helical membrane-spanning segments follow: residues 36–56 and 81–101; these read FSVL…AIGM and MFIA…IALI.

Belongs to the ATPase C chain family. F-type ATPases have 2 components, F(1) - the catalytic core - and F(0) - the membrane proton channel. F(1) has five subunits: alpha(3), beta(3), gamma(1), delta(1), epsilon(1). F(0) has three main subunits: a(1), b(2) and c(10-14). The alpha and beta chains form an alternating ring which encloses part of the gamma chain. F(1) is attached to F(0) by a central stalk formed by the gamma and epsilon chains, while a peripheral stalk is formed by the delta and b chains.

Its subcellular location is the cell inner membrane. In terms of biological role, f(1)F(0) ATP synthase produces ATP from ADP in the presence of a proton or sodium gradient. F-type ATPases consist of two structural domains, F(1) containing the extramembraneous catalytic core and F(0) containing the membrane proton channel, linked together by a central stalk and a peripheral stalk. During catalysis, ATP synthesis in the catalytic domain of F(1) is coupled via a rotary mechanism of the central stalk subunits to proton translocation. This Campylobacter jejuni subsp. jejuni serotype O:2 (strain ATCC 700819 / NCTC 11168) protein is ATP synthase subunit c.